The primary structure comprises 155 residues: Ribonuclease H (155 aa).

Residues 1–142 (MLKQVEIFTD…CDELARAAAM (142 aa)) form the RNase H type-1 domain. Mg(2+)-binding residues include aspartate 10, glutamate 48, aspartate 70, and aspartate 134.

It belongs to the RNase H family. In terms of assembly, monomer. The cofactor is Mg(2+).

It localises to the cytoplasm. It carries out the reaction Endonucleolytic cleavage to 5'-phosphomonoester.. In terms of biological role, endonuclease that specifically degrades the RNA of RNA-DNA hybrids. This is Ribonuclease H from Escherichia coli (strain 55989 / EAEC).